Consider the following 274-residue polypeptide: Large ribosomal subunit protein uL2 (274 aa).

A disordered region spans residues 224–274 (VAMNPVDHPHGGGEGRTSGGRHPVTPWGIPTKGYKTRRNKRSNKLIVQKRK). The segment covering 257-274 (YKTRRNKRSNKLIVQKRK) has biased composition (basic residues).

The protein belongs to the universal ribosomal protein uL2 family. Part of the 50S ribosomal subunit. Forms a bridge to the 30S subunit in the 70S ribosome.

Functionally, one of the primary rRNA binding proteins. Required for association of the 30S and 50S subunits to form the 70S ribosome, for tRNA binding and peptide bond formation. It has been suggested to have peptidyltransferase activity; this is somewhat controversial. Makes several contacts with the 16S rRNA in the 70S ribosome. The polypeptide is Large ribosomal subunit protein uL2 (Francisella tularensis subsp. tularensis (strain FSC 198)).